The primary structure comprises 273 residues: uncharacterized protein (273 aa).

The protein resides in the virion. This is an uncharacterized protein from Acanthamoeba polyphaga (Amoeba).